We begin with the raw amino-acid sequence, 354 residues long: UDP-N-acetylglucosamine--N-acetylmuramyl-(pentapeptide) pyrophosphoryl-undecaprenol N-acetylglucosamine transferase (354 aa).

UDP-N-acetyl-alpha-D-glucosamine-binding positions include 15–17 (TGG), asparagine 127, arginine 163, serine 191, isoleucine 244, 263–268 (ALTVSE), and glutamine 288.

It belongs to the glycosyltransferase 28 family. MurG subfamily.

It localises to the cell inner membrane. It carries out the reaction di-trans,octa-cis-undecaprenyl diphospho-N-acetyl-alpha-D-muramoyl-L-alanyl-D-glutamyl-meso-2,6-diaminopimeloyl-D-alanyl-D-alanine + UDP-N-acetyl-alpha-D-glucosamine = di-trans,octa-cis-undecaprenyl diphospho-[N-acetyl-alpha-D-glucosaminyl-(1-&gt;4)]-N-acetyl-alpha-D-muramoyl-L-alanyl-D-glutamyl-meso-2,6-diaminopimeloyl-D-alanyl-D-alanine + UDP + H(+). Its pathway is cell wall biogenesis; peptidoglycan biosynthesis. Functionally, cell wall formation. Catalyzes the transfer of a GlcNAc subunit on undecaprenyl-pyrophosphoryl-MurNAc-pentapeptide (lipid intermediate I) to form undecaprenyl-pyrophosphoryl-MurNAc-(pentapeptide)GlcNAc (lipid intermediate II). This Serratia proteamaculans (strain 568) protein is UDP-N-acetylglucosamine--N-acetylmuramyl-(pentapeptide) pyrophosphoryl-undecaprenol N-acetylglucosamine transferase.